The following is a 350-amino-acid chain: MALLRKINQVLLFLLIVTLCGILYKKVHKGTMLRNEADDDSETPEEMEDEIPVVICAAAGRMGAAMAAINSIYSNTDANILFYVVGLRNTLSRIRKWIEHSKLREINFKIVEFNPVVLKGKIRPDSSRPELLQPLNFVRFYLPLLIHQHEKVIYLDDDVIVQGDIQELYDTTLALGHAAAFSDDCDLPSSQDIHRLVGLQNTYMGYLDYRKKTIKDLGISPSTCSFNPGVIVANMTEWKHQRITKQLEKWMQKNVEENLYSSSLGGGVATSPMLIVFHGKYSTINPLWHIRHLGWNPDTRYSEHFLQEAKLLHWNGRHKPWDFPSVHNDLWESWFVPDPAGIFKLHHPNS.

Over Met1–Lys6 the chain is Cytoplasmic. The helical; Signal-anchor for type II membrane protein transmembrane segment at Ile7–Tyr24 threads the bilayer. Residues Lys25–Asn349 are Lumenal-facing. The N-linked (GlcNAc...) asparagine glycan is linked to Asn234.

This sequence belongs to the glycosyltransferase 8 family.

The protein resides in the membrane. This Bos taurus (Bovine) protein is Glycosyltransferase 8 domain-containing protein 2 (GLT8D2).